Consider the following 464-residue polypeptide: ATP synthase subunit beta (464 aa).

Residue 151 to 158 (GGAGVGKT) coordinates ATP.

Belongs to the ATPase alpha/beta chains family. In terms of assembly, F-type ATPases have 2 components, CF(1) - the catalytic core - and CF(0) - the membrane proton channel. CF(1) has five subunits: alpha(3), beta(3), gamma(1), delta(1), epsilon(1). CF(0) has three main subunits: a(1), b(2) and c(9-12). The alpha and beta chains form an alternating ring which encloses part of the gamma chain. CF(1) is attached to CF(0) by a central stalk formed by the gamma and epsilon chains, while a peripheral stalk is formed by the delta and b chains.

It is found in the cell membrane. The enzyme catalyses ATP + H2O + 4 H(+)(in) = ADP + phosphate + 5 H(+)(out). Its function is as follows. Produces ATP from ADP in the presence of a proton gradient across the membrane. The catalytic sites are hosted primarily by the beta subunits. The polypeptide is ATP synthase subunit beta (Clostridium kluyveri (strain ATCC 8527 / DSM 555 / NBRC 12016 / NCIMB 10680 / K1)).